We begin with the raw amino-acid sequence, 334 residues long: 2,3-bisphosphoglycerate-dependent phosphoglycerate mutase 1 (334 aa).

The N-terminal 48 residues, 1 to 48 (MATATSHQSVVSFASLRSSPSSTISQCGFKIDSSLSFTSKKTNFCKIK), are a transit peptide targeting the chloroplast. Substrate is bound by residues 84–91 (RHGESLWN), 97–98 (TG), Arg134, 188–191 (ERMY), Lys199, 215–216 (RR), and 259–260 (GN). His85 (tele-phosphohistidine intermediate) is an active-site residue. Residue Glu188 is the Proton donor/acceptor of the active site.

It belongs to the phosphoglycerate mutase family. BPG-dependent PGAM subfamily.

It is found in the plastid. It localises to the chloroplast. It catalyses the reaction (2R)-2-phosphoglycerate = (2R)-3-phosphoglycerate. The protein operates within carbohydrate degradation; glycolysis; pyruvate from D-glyceraldehyde 3-phosphate: step 3/5. Its function is as follows. Catalyzes the interconversion of 2-phosphoglycerate and 3-phosphoglycerate. The chain is 2,3-bisphosphoglycerate-dependent phosphoglycerate mutase 1 from Arabidopsis thaliana (Mouse-ear cress).